Consider the following 320-residue polypeptide: HPr kinase/phosphorylase (320 aa).

Catalysis depends on residues H141 and K162. 156–163 (GHSGLGKS) is an ATP binding site. Residue S163 coordinates Mg(2+). Catalysis depends on D180, which acts as the Proton acceptor; for phosphorylation activity. Proton donor; for dephosphorylation activity. The important for the catalytic mechanism of both phosphorylation and dephosphorylation stretch occupies residues 204–213 (LEVRGLGILN). A Mg(2+)-binding site is contributed by E205. Residue R248 is part of the active site. The interval 269-274 (PVAVGR) is important for the catalytic mechanism of dephosphorylation.

Belongs to the HPrK/P family. Homohexamer. Mg(2+) is required as a cofactor.

The enzyme catalyses [HPr protein]-L-serine + ATP = [HPr protein]-O-phospho-L-serine + ADP + H(+). It carries out the reaction [HPr protein]-O-phospho-L-serine + phosphate + H(+) = [HPr protein]-L-serine + diphosphate. Catalyzes the ATP- as well as the pyrophosphate-dependent phosphorylation of a specific serine residue in HPr, a phosphocarrier protein of the phosphoenolpyruvate-dependent sugar phosphotransferase system (PTS). HprK/P also catalyzes the pyrophosphate-producing, inorganic phosphate-dependent dephosphorylation (phosphorolysis) of seryl-phosphorylated HPr (P-Ser-HPr). In Neisseria meningitidis serogroup C / serotype 2a (strain ATCC 700532 / DSM 15464 / FAM18), this protein is HPr kinase/phosphorylase.